A 201-amino-acid polypeptide reads, in one-letter code: 3-isopropylmalate dehydratase small subunit (201 aa).

It belongs to the LeuD family. LeuD type 1 subfamily. In terms of assembly, heterodimer of LeuC and LeuD.

The catalysed reaction is (2R,3S)-3-isopropylmalate = (2S)-2-isopropylmalate. It participates in amino-acid biosynthesis; L-leucine biosynthesis; L-leucine from 3-methyl-2-oxobutanoate: step 2/4. Catalyzes the isomerization between 2-isopropylmalate and 3-isopropylmalate, via the formation of 2-isopropylmaleate. This chain is 3-isopropylmalate dehydratase small subunit, found in Shewanella sp. (strain MR-7).